Here is a 318-residue protein sequence, read N- to C-terminus: Methionyl-tRNA formyltransferase (318 aa).

Serine 112 to proline 115 contacts (6S)-5,6,7,8-tetrahydrofolate.

It belongs to the Fmt family.

It carries out the reaction L-methionyl-tRNA(fMet) + (6R)-10-formyltetrahydrofolate = N-formyl-L-methionyl-tRNA(fMet) + (6S)-5,6,7,8-tetrahydrofolate + H(+). Its function is as follows. Attaches a formyl group to the free amino group of methionyl-tRNA(fMet). The formyl group appears to play a dual role in the initiator identity of N-formylmethionyl-tRNA by promoting its recognition by IF2 and preventing the misappropriation of this tRNA by the elongation apparatus. The chain is Methionyl-tRNA formyltransferase from Mycobacterium leprae (strain Br4923).